Consider the following 99-residue polypeptide: UPF0125 protein BU253 (99 aa).

Belongs to the UPF0125 (RnfH) family.

This is UPF0125 protein BU253 from Buchnera aphidicola subsp. Acyrthosiphon pisum (strain APS) (Acyrthosiphon pisum symbiotic bacterium).